A 1050-amino-acid chain; its full sequence is Probable beta-glucosidase E (1050 aa).

Residues 1 to 87 form a disordered region; sequence MPPPDSNPGS…RSSSTNGGHN (87 aa). Residues 1 to 174 lie on the Cytoplasmic side of the membrane; it reads MPPPDSNPGS…VKYARIWRRT (174 aa). Over residues 11–20 the composition is skewed to basic and acidic residues; that stretch reads FRDHLKHDNK. The segment covering 47 to 56 has biased composition (low complexity); it reads SPRSASASSS. The segment covering 78 to 87 has biased composition (polar residues); it reads RSSSTNGGHN. The chain crosses the membrane as a helical; Signal-anchor for type II membrane protein span at residues 175-195; it reads LVVVIVALALLVWGFLRFTAA. The Extracellular segment spans residues 196–1050; the sequence is QRQGPKVWPM…SRDLPLQAKY (855 aa). Asparagine 236, asparagine 244, asparagine 300, and asparagine 430 each carry an N-linked (GlcNAc...) asparagine glycan. Residue aspartate 458 is part of the active site. N-linked (GlcNAc...) asparagine glycosylation is found at asparagine 501, asparagine 540, asparagine 605, asparagine 884, asparagine 920, asparagine 929, and asparagine 993.

The protein belongs to the glycosyl hydrolase 3 family.

Its subcellular location is the cell membrane. The enzyme catalyses Hydrolysis of terminal, non-reducing beta-D-glucosyl residues with release of beta-D-glucose.. It functions in the pathway glycan metabolism; cellulose degradation. Functionally, beta-glucosidases are one of a number of cellulolytic enzymes involved in the degradation of cellulosic biomass. Catalyzes the last step releasing glucose from the inhibitory cellobiose. The chain is Probable beta-glucosidase E (bglE) from Aspergillus clavatus (strain ATCC 1007 / CBS 513.65 / DSM 816 / NCTC 3887 / NRRL 1 / QM 1276 / 107).